Here is a 205-residue protein sequence, read N- to C-terminus: Guanylate kinase (205 aa).

In terms of domain architecture, Guanylate kinase-like spans 5–183 (GLLIVFSGPS…AAERVKKIIE (179 aa)). ATP is bound at residue 12-19 (GPSGVGKG).

Belongs to the guanylate kinase family.

Its subcellular location is the cytoplasm. The catalysed reaction is GMP + ATP = GDP + ADP. In terms of biological role, essential for recycling GMP and indirectly, cGMP. The chain is Guanylate kinase (gmk) from Lactococcus lactis subsp. lactis (strain IL1403) (Streptococcus lactis).